The following is a 43-amino-acid chain: MSDKPDLAEVSNFDKTKLKKTETQEKNPLPTKETIEQEKQATA.

Basic and acidic residues-rich tracts occupy residues 1–25 (MSDK…ETQE) and 33–43 (ETIEQEKQATA). The disordered stretch occupies residues 1–43 (MSDKPDLAEVSNFDKTKLKKTETQEKNPLPTKETIEQEKQATA). At Ser2 the chain carries N-acetylserine.

This sequence belongs to the thymosin beta family.

The protein localises to the cytoplasm. Its subcellular location is the cytoskeleton. Its function is as follows. Plays an important role in the organization of the cytoskeleton. Binds to and sequesters actin monomers (G actin) and therefore inhibits actin polymerization. This Oncorhynchus mykiss (Rainbow trout) protein is Thymosin beta-12.